A 609-amino-acid chain; its full sequence is UvrABC system protein C (609 aa).

A GIY-YIG domain is found at 16–94 (SSAGVYRMYD…IKQYMPKYNV (79 aa)). In terms of domain architecture, UVR spans 203–238 (QQVISALVDKMELAAERQAYEQAARFRDQIMALRKV).

This sequence belongs to the UvrC family. As to quaternary structure, interacts with UvrB in an incision complex.

The protein localises to the cytoplasm. Functionally, the UvrABC repair system catalyzes the recognition and processing of DNA lesions. UvrC both incises the 5' and 3' sides of the lesion. The N-terminal half is responsible for the 3' incision and the C-terminal half is responsible for the 5' incision. The polypeptide is UvrABC system protein C (Shewanella baltica (strain OS195)).